Consider the following 499-residue polypeptide: Probable dipeptidase B (499 aa).

Residue Cys26 is part of the active site.

This sequence belongs to the peptidase C69 family.

It catalyses the reaction an L-aminoacyl-L-amino acid + H2O = 2 an L-alpha-amino acid. The chain is Probable dipeptidase B (pepDB) from Streptococcus pyogenes serotype M6 (strain ATCC BAA-946 / MGAS10394).